The chain runs to 368 residues: Agmatine deiminase (368 aa).

C357 (amidino-cysteine intermediate) is an active-site residue.

Belongs to the agmatine deiminase family. In terms of assembly, homodimer.

The enzyme catalyses agmatine + H2O = N-carbamoylputrescine + NH4(+). It functions in the pathway amine and polyamine biosynthesis; putrescine biosynthesis via agmatine pathway; N-carbamoylputrescine from agmatine: step 1/1. Mediates the hydrolysis of agmatine into N-carbamoylputrescine in the arginine decarboxylase (ADC) pathway of putrescine biosynthesis, a basic polyamine. The sequence is that of Agmatine deiminase from Stutzerimonas stutzeri (strain A1501) (Pseudomonas stutzeri).